Reading from the N-terminus, the 436-residue chain is 3-ketoacyl-CoA thiolase (436 aa).

The active-site Acyl-thioester intermediate is C99. Active-site proton acceptor residues include H392 and C422.

Belongs to the thiolase-like superfamily. Thiolase family. As to quaternary structure, heterotetramer of two alpha chains (FadJ) and two beta chains (FadI).

The protein localises to the cytoplasm. It catalyses the reaction an acyl-CoA + acetyl-CoA = a 3-oxoacyl-CoA + CoA. The protein operates within lipid metabolism; fatty acid beta-oxidation. Catalyzes the final step of fatty acid oxidation in which acetyl-CoA is released and the CoA ester of a fatty acid two carbons shorter is formed. This is 3-ketoacyl-CoA thiolase from Salmonella heidelberg (strain SL476).